A 55-amino-acid chain; its full sequence is Cytochrome b-c1 complex subunit 9 (55 aa).

At 1-15 the chain is on the mitochondrial matrix side; sequence MKVIYNTLFKRTSTY. A helical transmembrane segment spans residues 16–41; sequence AVAIIASAFFFERALDVTSVAIFEGI. Residues 42 to 55 lie on the Chloroplast intermembrane side of the membrane; it reads NKGKLWKDIKGKYE.

Belongs to the UQCR10/QCR9 family. In terms of assembly, component of the ubiquinol-cytochrome c oxidoreductase (cytochrome b-c1 complex, complex III, CIII), a multisubunit enzyme composed of 3 respiratory subunits cytochrome b, cytochrome c1 and Rieske protein, 2 core protein subunits, and additional low-molecular weight protein subunits. The complex exists as an obligatory dimer and forms supercomplexes (SCs) in the inner mitochondrial membrane with cytochrome c oxidase (complex IV, CIV).

It is found in the mitochondrion inner membrane. Component of the ubiquinol-cytochrome c oxidoreductase, a multisubunit transmembrane complex that is part of the mitochondrial electron transport chain which drives oxidative phosphorylation. The respiratory chain contains 3 multisubunit complexes succinate dehydrogenase (complex II, CII), ubiquinol-cytochrome c oxidoreductase (cytochrome b-c1 complex, complex III, CIII) and cytochrome c oxidase (complex IV, CIV), that cooperate to transfer electrons derived from NADH and succinate to molecular oxygen, creating an electrochemical gradient over the inner membrane that drives transmembrane transport and the ATP synthase. The cytochrome b-c1 complex catalyzes electron transfer from ubiquinol to cytochrome c, linking this redox reaction to translocation of protons across the mitochondrial inner membrane, with protons being carried across the membrane as hydrogens on the quinol. In the process called Q cycle, 2 protons are consumed from the matrix, 4 protons are released into the intermembrane space and 2 electrons are passed to cytochrome c. This is Cytochrome b-c1 complex subunit 9 (ox) from Drosophila melanogaster (Fruit fly).